The chain runs to 461 residues: Ribonuclease inhibitor (461 aa).

N-acetylserine is present on Ser-2. Residues 2 to 11 (SLDIQSLDIQ) are 2 X 5 AA tandem repeats of S-L-D-I-Q. 15 LRR repeats span residues 20 to 48 (WAEL…CKDI), 49 to 76 (SSAL…VHCV), 77 to 105 (LQGL…CGVL), 106 to 133 (SSTL…LQLL), 134 to 162 (CEGL…CEPL), 163 to 190 (ASVL…VRVL), 191 to 219 (CQGL…CRDL), 220 to 247 (CGIV…MAEL), 248 to 276 (CPGL…CGDL), 277 to 304 (CRVL…ARLL), 305 to 333 (CETL…CSHF), 334 to 361 (SSVL…VREL), 362 to 390 (CQGL…CSSL), 391 to 418 (AATL…ILQL), and 419 to 447 (VESV…EDRL). The residue at position 82 (Thr-82) is a Phosphothreonine. The residue at position 91 (Ser-91) is a Phosphoserine.

Forms high-affinity heterodimers with RNASE1, ANG and RNASE2. The N-terminus is blocked. Post-translationally, at least 30 of the 32 cysteine residues are in the reduced form.

Its subcellular location is the cytoplasm. The protein localises to the nucleus. Functionally, ribonuclease inhibitor which inhibits RNASE1, RNASE2 and angiogenin (ANG). May play a role in redox homeostasis. Required to inhibit the cytotoxic tRNA ribonuclease activity of ANG in the cytoplasm in absence of stress. Relocates to the nucleus in response to stress, relieving inhibition of ANG in the cytoplasm, and inhibiting the angiogenic activity of ANG in the nucleus. In Homo sapiens (Human), this protein is Ribonuclease inhibitor.